The following is a 330-amino-acid chain: Aspartate--ammonia ligase (330 aa).

The protein belongs to the class-II aminoacyl-tRNA synthetase family. AsnA subfamily.

It localises to the cytoplasm. The enzyme catalyses L-aspartate + NH4(+) + ATP = L-asparagine + AMP + diphosphate + H(+). The protein operates within amino-acid biosynthesis; L-asparagine biosynthesis; L-asparagine from L-aspartate (ammonia route): step 1/1. This Actinobacillus succinogenes (strain ATCC 55618 / DSM 22257 / CCUG 43843 / 130Z) protein is Aspartate--ammonia ligase.